Reading from the N-terminus, the 662-residue chain is Glycogen debranching enzyme (662 aa).

D338 functions as the Nucleophile in the catalytic mechanism. E373 serves as the catalytic Proton donor.

The protein belongs to the glycosyl hydrolase 13 family.

The catalysed reaction is Hydrolysis of (1-&gt;6)-alpha-D-glucosidic linkages to branches with degrees of polymerization of three or four glucose residues in limit dextrin.. The protein operates within glycan degradation; glycogen degradation. Removes maltotriose and maltotetraose chains that are attached by 1,6-alpha-linkage to the limit dextrin main chain, generating a debranched limit dextrin. This chain is Glycogen debranching enzyme, found in Yersinia pestis bv. Antiqua (strain Angola).